Consider the following 566-residue polypeptide: Amidophosphoribosyltransferase 1, chloroplastic (566 aa).

Low complexity predominate over residues 1–13 (MAATTSFSSSLSL). 2 disordered regions span residues 1–28 (MAATTSFSSSLSLITKPNNSSYTNQPLP) and 58–87 (VSSYFSSPSPSEDNSHTPFDYHNDEDDEKP). A chloroplast-targeting transit peptide spans 1-58 (MAATTSFSSSLSLITKPNNSSYTNQPLPLFPKPFLKPPHLSLLPSPLSSPPPSLIHGV). Residues 15 to 25 (TKPNNSSYTNQ) show a composition bias toward polar residues. Residues 59–68 (SSYFSSPSPS) are compositionally biased toward low complexity. Basic and acidic residues predominate over residues 70–87 (DNSHTPFDYHNDEDDEKP). Cys91 acts as the Nucleophile in catalysis. One can recognise a Glutamine amidotransferase type-2 domain in the interval 91–311 (CGVVGIYGDP…PGEVLVVDKD (221 aa)). Residues Cys327, Cys473, Cys524, and Cys527 each coordinate [4Fe-4S] cluster.

In the C-terminal section; belongs to the purine/pyrimidine phosphoribosyltransferase family. It depends on [4Fe-4S] cluster as a cofactor. Mg(2+) serves as cofactor. Expressed in flowers and roots. Also present in leaves, and, to a lower extent, in cotyledons.

It localises to the plastid. It is found in the chloroplast stroma. The catalysed reaction is 5-phospho-beta-D-ribosylamine + L-glutamate + diphosphate = 5-phospho-alpha-D-ribose 1-diphosphate + L-glutamine + H2O. It functions in the pathway purine metabolism; IMP biosynthesis via de novo pathway; N(1)-(5-phospho-D-ribosyl)glycinamide from 5-phospho-alpha-D-ribose 1-diphosphate: step 1/2. Catalyzes the first committed step of 'de novo' purine biosynthesis from glutamine. Involved in plastid biogenesis and cell division. The polypeptide is Amidophosphoribosyltransferase 1, chloroplastic (ASE1) (Arabidopsis thaliana (Mouse-ear cress)).